The sequence spans 416 residues: Ribulose bisphosphate carboxylase large chain (416 aa).

N6,N6,N6-trimethyllysine is present on Lys-5. The substrate site is built by Asn-114 and Thr-164. Lys-166 acts as the Proton acceptor in catalysis. Lys-168 is a binding site for substrate. Residues Lys-192, Asp-194, and Glu-195 each coordinate Mg(2+). The residue at position 192 (Lys-192) is an N6-carboxylysine. The active-site Proton acceptor is the His-285. Residues Arg-286, His-318, and Ser-370 each coordinate substrate.

The protein belongs to the RuBisCO large chain family. Type I subfamily. In terms of assembly, heterohexadecamer of 8 large chains and 8 small chains; disulfide-linked. The disulfide link is formed within the large subunit homodimers. Mg(2+) is required as a cofactor. The disulfide bond which can form in the large chain dimeric partners within the hexadecamer appears to be associated with oxidative stress and protein turnover.

The protein resides in the plastid. It is found in the chloroplast. It carries out the reaction 2 (2R)-3-phosphoglycerate + 2 H(+) = D-ribulose 1,5-bisphosphate + CO2 + H2O. It catalyses the reaction D-ribulose 1,5-bisphosphate + O2 = 2-phosphoglycolate + (2R)-3-phosphoglycerate + 2 H(+). In terms of biological role, ruBisCO catalyzes two reactions: the carboxylation of D-ribulose 1,5-bisphosphate, the primary event in carbon dioxide fixation, as well as the oxidative fragmentation of the pentose substrate in the photorespiration process. Both reactions occur simultaneously and in competition at the same active site. This chain is Ribulose bisphosphate carboxylase large chain (rbcL), found in Spigelia marilandica (Woodland pinkroot).